Consider the following 123-residue polypeptide: Large ribosomal subunit protein bL12 (123 aa).

Belongs to the bacterial ribosomal protein bL12 family. As to quaternary structure, homodimer. Part of the ribosomal stalk of the 50S ribosomal subunit. Forms a multimeric L10(L12)X complex, where L10 forms an elongated spine to which 2 to 4 L12 dimers bind in a sequential fashion. Binds GTP-bound translation factors.

Forms part of the ribosomal stalk which helps the ribosome interact with GTP-bound translation factors. Is thus essential for accurate translation. The polypeptide is Large ribosomal subunit protein bL12 (Parvibaculum lavamentivorans (strain DS-1 / DSM 13023 / NCIMB 13966)).